A 391-amino-acid chain; its full sequence is MTNNTKTITLNLGPQHPATHGVLRLILEMDGEVVNNAVPHIGLLHRGTEKLIEHKTYLQAIPYFDRLDYVSPMCQEHAFALAVESLLECEVPRRAQFIRVLFSELTRILNHTLNIGSQALDIGATTPLLWLFEEREKIMEFYEHVSGSRMHSNYFRPGGVAADLPEGLLEDIDKFIEQFPPKLHDIESLLNENRLWKQRLVDIGVASQKEAMDWGFSGPMLRGSGIAWDLRKSNPYDVYDEMDFKVPIGKNGDCYDRYFVRMLEMYESIKIIKQCIEKMPKGAVKTDDPKLTPPTRAKMKESMEAMIHHFKLYTEGYDVPAGETYKAVEAPKGEFGVYLYSQGGNRPYRCRIKAPGFAHLQGLDFMSKGHLMADVITIIATLDIVFGEIDR.

This sequence belongs to the complex I 49 kDa subunit family. As to quaternary structure, NDH-1 is composed of 14 different subunits. Subunits NuoB, C, D, E, F, and G constitute the peripheral sector of the complex.

It localises to the cell inner membrane. The catalysed reaction is a quinone + NADH + 5 H(+)(in) = a quinol + NAD(+) + 4 H(+)(out). NDH-1 shuttles electrons from NADH, via FMN and iron-sulfur (Fe-S) centers, to quinones in the respiratory chain. The immediate electron acceptor for the enzyme in this species is believed to be ubiquinone. Couples the redox reaction to proton translocation (for every two electrons transferred, four hydrogen ions are translocated across the cytoplasmic membrane), and thus conserves the redox energy in a proton gradient. The protein is NADH-quinone oxidoreductase subunit D of Rickettsia massiliae (strain Mtu5).